Here is a 637-residue protein sequence, read N- to C-terminus: MRSVDSLLLLGLTGLASQANAHPAKRQPNDSPLSKRGVDLDAFRLPELAKYVPQDEVPDISNARIAPSSDYTKTAEEFVKSVVGKATFRLVSDHYVGTNGVAHVRFKQTVNDIDVDNADFNVNIGADGKVFSYGNSFYTGKIPGPLVKRDTSDPVTALKSTVEVLDLPVDASDAKAEPKGDEHYTFTDTSGTVKKPEAKLVYLIDGEQNLKLTWRVETDVLDNWLLTYVDADKTEKVVGVVDYVADLATYEVYPWGVNDPSKGSRSVVEDPWNIATSEFTWISDGSANYTTTRGNNAIAQVNPSGGTAYLNNYRPSSSSLEFEYTFSTTQTDPVSYRDASITQLFYTANKYHDLLHLLGFNEAAGNFEVNNNGQGGAGNDFVILNSQDGSGTNNANFATPADGSPGRMRMYLWTYSTPRRDSSFDAGVVIHEYTHGLSNRLTGGPANAGCLSGTESGGMGEGWSDFMATAVHLGARDTRSTNHVIGDWVYNNANGIRAYPYSTSLTTNPYTYRSVNSLSGVHAVGTYWATALYEVLWNLIDKHGKNDADTPTFDSNGVPTDGKYLAMKLVIDGMALQPCNPNMVQARDAILDADVALTGGDNQCELWTGFAKRGLGTGARYSSTSRTESFALPSGVC.

An N-terminal signal peptide occupies residues 1–21 (MRSVDSLLLLGLTGLASQANA). The propeptide occupies 22–246 (HPAKRQPNDS…VVGVVDYVAD (225 aa)). A glycan (N-linked (GlcNAc...) asparagine) is linked at N288. H431 is a Zn(2+) binding site. E432 is an active-site residue. Position 435 (H435) interacts with Zn(2+).

Belongs to the peptidase M36 family. Zn(2+) is required as a cofactor.

Its subcellular location is the secreted. In terms of biological role, secreted metalloproteinase that probably acts as a virulence factor. Cleaves Z.mays Endochitinase A (CHIA) between residues 'Gly-29' and 'Cys-30'. The chain is Extracellular metalloproteinase MEP (MEP) from Fusarium vanettenii (strain ATCC MYA-4622 / CBS 123669 / FGSC 9596 / NRRL 45880 / 77-13-4) (Fusarium solani subsp. pisi).